The primary structure comprises 87 residues: RNA-binding protein Hfq (87 aa).

The region spanning 9-68 (DPFLNTLRRERIPVSIYLVNGIKLQGYIESFDQFVILLKNSISQMIYKHAISTVVPNHTN) is the Sm domain. The segment at 66–87 (HTNNQEHNQSQYNNNNACISKP) is disordered.

This sequence belongs to the Hfq family. In terms of assembly, homohexamer.

In terms of biological role, RNA chaperone that binds small regulatory RNA (sRNAs) and mRNAs to facilitate mRNA translational regulation in response to envelope stress, environmental stress and changes in metabolite concentrations. Also binds with high specificity to tRNAs. In Wigglesworthia glossinidia brevipalpis, this protein is RNA-binding protein Hfq.